A 114-amino-acid polypeptide reads, in one-letter code: Large ribosomal subunit protein bL19 (114 aa).

This sequence belongs to the bacterial ribosomal protein bL19 family.

Its function is as follows. This protein is located at the 30S-50S ribosomal subunit interface and may play a role in the structure and function of the aminoacyl-tRNA binding site. This chain is Large ribosomal subunit protein bL19, found in Heliobacterium modesticaldum (strain ATCC 51547 / Ice1).